The sequence spans 258 residues: MSTTRSSLSIDLNADLGETTGGNPVSDDAAMVAIVSSANVACGFHAGDAHAISNTLAAAAENNVTVGAHVGYNDQAGFGRRFIDYSPAELADEVLYQIGALDALAKARGTQVRYVKPHGAMYNTIVHHEAQAKAVIEGIKAFGADLPVMLLPGAVAADYAEKAGLRVINEVFADRAYNPDGTLVSRRENGAVLHDPEVVARRVVRMAEEGTIEAIDGSTIRTTADSVCVHGDSPGAVAMAERIAAELQSNNITIGSFL.

It belongs to the LamB/PxpA family. Forms a complex composed of PxpA, PxpB and PxpC.

It catalyses the reaction 5-oxo-L-proline + ATP + 2 H2O = L-glutamate + ADP + phosphate + H(+). Its function is as follows. Catalyzes the cleavage of 5-oxoproline to form L-glutamate coupled to the hydrolysis of ATP to ADP and inorganic phosphate. The protein is 5-oxoprolinase subunit A of Corynebacterium jeikeium (strain K411).